Here is a 309-residue protein sequence, read N- to C-terminus: Putative pyridoxal kinase C6F6.11c (309 aa).

Residues Ser-12 and Tyr-123 each contribute to the substrate site. ATP contacts are provided by residues 182 to 183 (SS) and 209 to 221 (LIPV…RGTG). Residue Asp-222 participates in substrate binding.

Belongs to the pyridoxine kinase family. A divalent metal cation serves as cofactor.

Its subcellular location is the cytoplasm. It is found in the nucleus. It catalyses the reaction pyridoxal + ATP = pyridoxal 5'-phosphate + ADP + H(+). Functionally, required for synthesis of pyridoxal-5-phosphate from vitamin B6. The polypeptide is Putative pyridoxal kinase C6F6.11c (Schizosaccharomyces pombe (strain 972 / ATCC 24843) (Fission yeast)).